We begin with the raw amino-acid sequence, 682 residues long: Heat shock 70 kDa protein 9, mitochondrial (682 aa).

A mitochondrion-targeting transit peptide spans 1–46 (MASVALLRSFRRREVQMASVSAFKSVSANGKNSMFGKLGYLARPFC). Positions 640–682 (SKIGEHMSKGSGSSGSDGSSGEGTSGTEQTPEAEFEEASGSRK) are disordered. Over residues 651–663 (GSSGSDGSSGEGT) the composition is skewed to gly residues.

This sequence belongs to the heat shock protein 70 (TC 1.A.33) family. DnaK subfamily. As to quaternary structure, interacts with HSCB.

The protein localises to the mitochondrion. The protein resides in the cytoplasm. It localises to the cytosol. In terms of biological role, chaperone involved in the maturation of iron-sulfur [Fe-S] cluster-containing proteins. Has a low intrinsic ATPase activity which is markedly stimulated by HSCB and ISU1. In cooperation with other chaperones, Hsp70s are key components that facilitate folding of de novo synthesized proteins, assist translocation of precursor proteins into organelles, and are responsible for degradation of damaged protein under stress conditions. The sequence is that of Heat shock 70 kDa protein 9, mitochondrial from Arabidopsis thaliana (Mouse-ear cress).